We begin with the raw amino-acid sequence, 267 residues long: Chlorophyll a-b binding protein 3A, chloroplastic (267 aa).

The transit peptide at 1–34 directs the protein to the chloroplast; the sequence is MAASTMALSSSTFAGKTVKLAPSSSEITGNGRIT. The helical transmembrane segment at 153-173 threads the bilayer; the sequence is LVHAQSILAIWACQVVLMGAV. Residues Val154, Ser158, Gln166, Glu174, Arg177, and Leu183 each coordinate chlorophyll b. Residues Lys214, Glu215, Asn218, Arg220, Gln232, His247, and Ala256 each contribute to the chlorophyll a site. The helical transmembrane segment at 221-241 threads the bilayer; the sequence is LAMFSMFGFFVQAIVTGKGPL. Phe263 is a binding site for chlorophyll b.

The protein belongs to the light-harvesting chlorophyll a/b-binding (LHC) protein family. The LHC complex consists of chlorophyll a-b binding proteins. The cofactor is Binds at least 14 chlorophylls (8 Chl-a and 6 Chl-b) and carotenoids such as lutein and neoxanthin.. In terms of processing, photoregulated by reversible phosphorylation of its threonine residues.

It localises to the plastid. It is found in the chloroplast thylakoid membrane. In terms of biological role, the light-harvesting complex (LHC) functions as a light receptor, it captures and delivers excitation energy to photosystems with which it is closely associated. The sequence is that of Chlorophyll a-b binding protein 3A, chloroplastic (CAB3A) from Solanum lycopersicum (Tomato).